A 565-amino-acid chain; its full sequence is Glycine--tRNA ligase (565 aa).

2 residues coordinate substrate: arginine 98 and glutamate 164. ATP is bound by residues 196–198, 206–211, 323–324, and 440–443; these read RNE, IRLREF, EI, and GIDR. A substrate-binding site is contributed by 211–215; it reads FTQAE. 436–440 provides a ligand contact to substrate; it reads EPSFG.

Belongs to the class-II aminoacyl-tRNA synthetase family.

The protein localises to the cytoplasm. It carries out the reaction tRNA(Gly) + glycine + ATP = glycyl-tRNA(Gly) + AMP + diphosphate. Its function is as follows. Catalyzes the attachment of glycine to tRNA(Gly). The sequence is that of Glycine--tRNA ligase from Methanothermobacter thermautotrophicus (strain ATCC 29096 / DSM 1053 / JCM 10044 / NBRC 100330 / Delta H) (Methanobacterium thermoautotrophicum).